A 405-amino-acid chain; its full sequence is Formate-dependent phosphoribosylglycinamide formyltransferase (405 aa).

N(1)-(5-phospho-beta-D-ribosyl)glycinamide contacts are provided by residues 22–23 (EL) and Glu82. ATP contacts are provided by residues Arg115, Lys162, 167-172 (SSGKGQ), 202-205 (EGFI), and Glu210. The ATP-grasp domain occupies 120-320 (RLAAETLGLP…EFELHARAIL (201 aa)). Mg(2+)-binding residues include Glu279 and Glu291. Residues Asp298, Lys367, and 374–375 (RR) each bind N(1)-(5-phospho-beta-D-ribosyl)glycinamide.

The protein belongs to the PurK/PurT family. As to quaternary structure, homodimer.

The catalysed reaction is N(1)-(5-phospho-beta-D-ribosyl)glycinamide + formate + ATP = N(2)-formyl-N(1)-(5-phospho-beta-D-ribosyl)glycinamide + ADP + phosphate + H(+). Its pathway is purine metabolism; IMP biosynthesis via de novo pathway; N(2)-formyl-N(1)-(5-phospho-D-ribosyl)glycinamide from N(1)-(5-phospho-D-ribosyl)glycinamide (formate route): step 1/1. In terms of biological role, involved in the de novo purine biosynthesis. Catalyzes the transfer of formate to 5-phospho-ribosyl-glycinamide (GAR), producing 5-phospho-ribosyl-N-formylglycinamide (FGAR). Formate is provided by PurU via hydrolysis of 10-formyl-tetrahydrofolate. This is Formate-dependent phosphoribosylglycinamide formyltransferase from Leptothrix cholodnii (strain ATCC 51168 / LMG 8142 / SP-6) (Leptothrix discophora (strain SP-6)).